The following is a 500-amino-acid chain: Maturase K (500 aa).

Belongs to the intron maturase 2 family. MatK subfamily.

It is found in the plastid. It localises to the chloroplast. Its function is as follows. Usually encoded in the trnK tRNA gene intron. Probably assists in splicing its own and other chloroplast group II introns. The polypeptide is Maturase K (Adiantum capillus-veneris (Maidenhair fern)).